Consider the following 634-residue polypeptide: BTB/POZ domain-containing protein At1g03010 (634 aa).

The BTB domain occupies 38-103 (SDLTVQVGSS…CYGINIEINL (66 aa)). An NPH3 domain is found at 205 to 503 (DWWGKSLAVL…VQVLYFEQIR (299 aa)). At Tyr444 the chain carries Phosphotyrosine. Residues 542 to 580 (RDNYASVRRENRELKLEVARMRMRLTDLEKDHISIKQEL) are a coiled coil.

This sequence belongs to the NPH3 family.

It participates in protein modification; protein ubiquitination. In terms of biological role, may act as a substrate-specific adapter of an E3 ubiquitin-protein ligase complex (CUL3-RBX1-BTB) which mediates the ubiquitination and subsequent proteasomal degradation of target proteins. The chain is BTB/POZ domain-containing protein At1g03010 from Arabidopsis thaliana (Mouse-ear cress).